A 370-amino-acid polypeptide reads, in one-letter code: MVEADRPGKLFIGGLNTETNEKALEAVFCKYGRVVEVLLMKDRETNKSRGFAFVTFESPADAKDAARELNGKALDGKPIKVEQATKPSFSTPSRRGPPTSPRSRGPPRGLRGSRGGGSSRGQMPLKRGPPPRSGGPPPKRSAPSGPLRSSEMGGRAPLSRERDGYGAPPRRDPMPSRRDVYMSPRDDGYSGKDRYDGYSGRDYGSSRDSRDYGPPPRDYSYRDYGHSSSRDDYGSRGYSDRDGYGGRDSRDYSDHQSGGSYRDSYEGYGNSRSAPPARGPPPSYGGSSRYDDYSSTRDGYGGRDSYSSSRNDIYSSGRDRVGRQERGLPPSMDRGYPPPRDSYSSSSRGGPRGGGRGGSRSDRGGGRSRY.

One can recognise an RRM domain in the interval 8–86 (GKLFIGGLNT…KPIKVEQATK (79 aa)). A compositionally biased stretch (basic and acidic residues) spans 69 to 80 (LNGKALDGKPIK). The interval 69–370 (LNGKALDGKP…SDRGGGRSRY (302 aa)) is disordered. The span at 87 to 110 (PSFSTPSRRGPPTSPRSRGPPRGL) shows a compositional bias: low complexity. Residues 127 to 140 (RGPPPRSGGPPPKR) show a composition bias toward pro residues. 2 stretches are compositionally biased toward basic and acidic residues: residues 158–196 (LSRE…DRYD) and 219–254 (YSYR…DYSD). The segment covering 303–316 (RDSYSSSRNDIYSS) has biased composition (low complexity). 2 stretches are compositionally biased toward basic and acidic residues: residues 317–326 (GRDRVGRQER) and 359–370 (SRSDRGGGRSRY).

Its subcellular location is the nucleus. Its function is as follows. RNA-binding protein that plays several role in the regulation of pre- and post-transcriptional processes. Implicated in tissue-specific regulation of gene transcription and alternative splicing of pre-mRNAs. Associates with chromatin. Associates with nascent mRNAs transcribed by RNA polymerase II. Component of the supraspliceosome complex that regulates pre-mRNA alternative splice site selection. Binds non-specifically to pre-mRNAs. Required for embryonic development, in particular of the brain. The chain is RNA-binding motif protein, X chromosome (rbmx) from Xenopus laevis (African clawed frog).